A 546-amino-acid polypeptide reads, in one-letter code: Cytochrome P450 monooxygenase 219 (546 aa).

The N-terminal stretch at 1–22 is a signal peptide; sequence MATLIVLLYGLLAFGTVWLVRR. Asparagine 367 and asparagine 441 each carry an N-linked (GlcNAc...) asparagine glycan. Cysteine 487 lines the heme pocket.

The protein belongs to the cytochrome P450 family. Heme serves as cofactor.

Its pathway is secondary metabolite biosynthesis. Cytochrome P450 monooxygenase that is able to use testosterone, anthracene, carbazole, pyrene, phenanthrene and trans-stilbene as substrates for oxidation. These multifunctional properties against a series of polycyclic aromatic hydrocarbons (PAHs) suggest that CYP219 would play important roles, at least in part, in fungal metabolic systems involved in xenobiotic detoxification. This Postia placenta (strain ATCC 44394 / Madison 698-R) (Brown rot fungus) protein is Cytochrome P450 monooxygenase 219.